The chain runs to 145 residues: Type II secretion system core protein G (145 aa).

A propeptide spans 1–9 (MRATDKQRG) (leader sequence). F10 is subject to N-methylphenylalanine. The helical transmembrane segment at 10 to 30 (FTLLEIMVVIVIIGVLASLVV) threads the bilayer. Positions 123-145 (AGPDGEMGTEDDITNWGLSKKKK) are disordered.

It belongs to the GSP G family. Type II secretion system is composed of four main components: the outer membrane complex, the inner membrane complex, the cytoplasmic secretion ATPase and the periplasm-spanning pseudopilus. Forms homomultimers. Post-translationally, cleaved by the prepilin peptidase. In terms of processing, methylated by prepilin peptidase at the amino group of the N-terminal phenylalanine once the leader sequence is cleaved.

Its subcellular location is the cell inner membrane. Its function is as follows. Core component of the type II secretion system required for the energy-dependent secretion of extracellular factors such as proteases and toxins from the periplasm. Pseudopilin (pilin-like) protein that polymerizes to form the pseudopilus. Further polymerization triggers pseudopilus growth. This Escherichia coli (strain K12) protein is Type II secretion system core protein G (gspG).